We begin with the raw amino-acid sequence, 411 residues long: MSRSPSLPDRPTLDVDPESTPAERLNALQDHYVDIVAVNGELQAQLDDVEARREELREEVNRLQRENETLKTASLYLATVEDLPEDGSAVIKQHGNNQEVLTELSPRLADTLEVGDRVAINDSFSVQRVLDDETDARAQAMEVDESPSVTYADIGGLDDQLREVREAVEDPLVNPEKFDAVGVEPPSGVLLHGPPGTGKTMLAKAVANQTDASFIKMAGSELVRKFIGEGSRLVRDLFELAEQKDPAIIFIDEIDAVAAKRTDSKTSGDAEVQRTMMQLLSEMDGFDERGDIRIIAATNRFDMLDSAILRPGRFDRLIEVPNPNPDARERILEIHAGEMNVADSVDFSDLAADTAEFSGAQLASLATEAGMFAIRDDRDEVHRQDFDDAYEKLVAEGDTESSGPRYPSYIQ.

Positions 35–75 form a coiled coil; that stretch reads IVAVNGELQAQLDDVEARREELREEVNRLQRENETLKTASL. Residues 196 to 201 and His335 each bind ATP; that span reads GTGKTM. Positions 408-411 are docks into pockets in the proteasome alpha-ring to cause gate opening; it reads SYIQ.

This sequence belongs to the AAA ATPase family. Homohexamer. The hexameric complex has a two-ring architecture resembling a top hat that caps the 20S proteasome core at one or both ends. Upon ATP-binding, the C-terminus of PAN interacts with the alpha-rings of the proteasome core by binding to the intersubunit pockets.

It localises to the cytoplasm. Its function is as follows. ATPase which is responsible for recognizing, binding, unfolding and translocation of substrate proteins into the archaeal 20S proteasome core particle. Is essential for opening the gate of the 20S proteasome via an interaction with its C-terminus, thereby allowing substrate entry and access to the site of proteolysis. Thus, the C-termini of the proteasomal ATPase function like a 'key in a lock' to induce gate opening and therefore regulate proteolysis. Unfolding activity requires energy from ATP hydrolysis, whereas ATP binding alone promotes ATPase-20S proteasome association which triggers gate opening, and supports translocation of unfolded substrates. The polypeptide is Proteasome-activating nucleotidase 2 (Halobacterium salinarum (strain ATCC 700922 / JCM 11081 / NRC-1) (Halobacterium halobium)).